Consider the following 131-residue polypeptide: Global transcriptional regulator Spx (131 aa).

Cys10 and Cys13 are disulfide-bonded.

Belongs to the ArsC family. Spx subfamily. Interacts with the C-terminal domain of the alpha subunit of the RNAP.

It is found in the cytoplasm. In terms of biological role, global transcriptional regulator that plays a key role in stress response and exerts either positive or negative regulation of genes. Acts by interacting with the C-terminal domain of the alpha subunit of the RNA polymerase (RNAP). This interaction can enhance binding of RNAP to the promoter region of target genes and stimulate their transcription, or block interaction of RNAP with activator. The polypeptide is Global transcriptional regulator Spx (Listeria innocua serovar 6a (strain ATCC BAA-680 / CLIP 11262)).